The primary structure comprises 510 residues: NAD(P)H-quinone oxidoreductase subunit 2 B, chloroplastic (510 aa).

The next 13 membrane-spanning stretches (helical) occupy residues L24–L44, I57–F77, I99–I119, M124–C144, L149–Y169, Y183–G203, P227–A247, W295–I315, M323–D343, Y354–L374, A395–F415, L418–L438, and L482–I502.

It belongs to the complex I subunit 2 family. NDH is composed of at least 16 different subunits, 5 of which are encoded in the nucleus.

The protein resides in the plastid. It is found in the chloroplast thylakoid membrane. The enzyme catalyses a plastoquinone + NADH + (n+1) H(+)(in) = a plastoquinol + NAD(+) + n H(+)(out). The catalysed reaction is a plastoquinone + NADPH + (n+1) H(+)(in) = a plastoquinol + NADP(+) + n H(+)(out). NDH shuttles electrons from NAD(P)H:plastoquinone, via FMN and iron-sulfur (Fe-S) centers, to quinones in the photosynthetic chain and possibly in a chloroplast respiratory chain. The immediate electron acceptor for the enzyme in this species is believed to be plastoquinone. Couples the redox reaction to proton translocation, and thus conserves the redox energy in a proton gradient. The protein is NAD(P)H-quinone oxidoreductase subunit 2 B, chloroplastic of Lotus japonicus (Lotus corniculatus var. japonicus).